A 184-amino-acid chain; its full sequence is Photosystem I assembly protein Ycf4 (184 aa).

2 helical membrane-spanning segments follow: residues phenylalanine 22–serine 42 and isoleucine 57–serine 77.

It belongs to the Ycf4 family.

Its subcellular location is the plastid. It localises to the chloroplast thylakoid membrane. Seems to be required for the assembly of the photosystem I complex. This is Photosystem I assembly protein Ycf4 from Populus trichocarpa (Western balsam poplar).